The sequence spans 178 residues: Ribosome maturation factor RimP (178 aa).

This sequence belongs to the RimP family.

Its subcellular location is the cytoplasm. In terms of biological role, required for maturation of 30S ribosomal subunits. The sequence is that of Ribosome maturation factor RimP from Maricaulis maris (strain MCS10) (Caulobacter maris).